The following is a 134-amino-acid chain: Ribosome-binding factor A (134 aa).

Belongs to the RbfA family. Monomer. Binds 30S ribosomal subunits, but not 50S ribosomal subunits or 70S ribosomes.

The protein resides in the cytoplasm. In terms of biological role, one of several proteins that assist in the late maturation steps of the functional core of the 30S ribosomal subunit. Associates with free 30S ribosomal subunits (but not with 30S subunits that are part of 70S ribosomes or polysomes). Required for efficient processing of 16S rRNA. May interact with the 5'-terminal helix region of 16S rRNA. This Bartonella bacilliformis (strain ATCC 35685 / KC583 / Herrer 020/F12,63) protein is Ribosome-binding factor A.